Reading from the N-terminus, the 128-residue chain is Cytochrome c-type biogenesis protein CcmE (128 aa).

Over 1 to 8 the chain is Cytoplasmic; that stretch reads MQKIVRNR. A helical; Signal-anchor for type II membrane protein membrane pass occupies residues 9–29; it reads LIKIIICFCSACLGISIILYN. Over 30 to 128 the chain is Periplasmic; the sequence is LEKNIIFFFP…KHDENYRPPS (99 aa). Histidine 120 and tyrosine 124 together coordinate heme.

The protein belongs to the CcmE/CycJ family.

Its subcellular location is the cell inner membrane. Its function is as follows. Heme chaperone required for the biogenesis of c-type cytochromes. Transiently binds heme delivered by CcmC and transfers the heme to apo-cytochromes in a process facilitated by CcmF and CcmH. In Rickettsia prowazekii (strain Madrid E), this protein is Cytochrome c-type biogenesis protein CcmE.